The following is a 64-amino-acid chain: MAKLKTRRGAAKRFKATANGFKRKQAFKRHILTKKSAKRIRQLRGCVMVHVSDMNSVRRMCPYI.

The protein belongs to the bacterial ribosomal protein bL35 family.

This chain is Large ribosomal subunit protein bL35, found in Acinetobacter baylyi (strain ATCC 33305 / BD413 / ADP1).